A 243-amino-acid polypeptide reads, in one-letter code: Zinc import ATP-binding protein ZnuC (243 aa).

The 218-residue stretch at 25–242 (LVVDSITLFY…AKFMSVFPEN (218 aa)) folds into the ABC transporter domain. Position 57–64 (57–64 (GPNGGGKT)) interacts with ATP.

Belongs to the ABC transporter superfamily. Zinc importer (TC 3.A.1.15.5) family. As to quaternary structure, the complex is composed of two ATP-binding proteins (ZnuC), two transmembrane proteins (ZnuB) and a solute-binding protein (ZnuA).

It is found in the cell inner membrane. It carries out the reaction Zn(2+)(out) + ATP(in) + H2O(in) = Zn(2+)(in) + ADP(in) + phosphate(in) + H(+)(in). Its function is as follows. Part of the ABC transporter complex ZnuABC involved in zinc import. Responsible for energy coupling to the transport system. The polypeptide is Zinc import ATP-binding protein ZnuC (Anaplasma phagocytophilum (strain HZ)).